A 258-amino-acid polypeptide reads, in one-letter code: Homeobox-leucine zipper protein ATHB-7 (258 aa).

Positions 29-88 form a DNA-binding region, homeobox; sequence NKNNQRRFSDEQIKSLEMMFESETRLEPRKKVQLARELGLQPRQVAIWFQNKRARWKSKQ. Residues 89 to 124 are leucine-zipper; it reads LETEYNILRQNYDNLASQFESLKKEKQALVSELQRL. The segment at 149–183 is disordered; it reads SSTHHESENEENRRRKPEEVRPEMEMKDDKGHHGV. The segment covering 151–183 has biased composition (basic and acidic residues); that stretch reads THHESENEENRRRKPEEVRPEMEMKDDKGHHGV.

The protein belongs to the HD-ZIP homeobox family. Class I subfamily. In terms of assembly, interacts with TBP2 and TFIIB1. Widely expressed.

Its subcellular location is the nucleus. Its function is as follows. Probable transcription activator that may act as growth regulators in response to water deficit. This chain is Homeobox-leucine zipper protein ATHB-7 (ATHB-7), found in Arabidopsis thaliana (Mouse-ear cress).